The chain runs to 163 residues: Ribonuclease H (163 aa).

The region spanning methionine 1–cysteine 142 is the RNase H type-1 domain. Mg(2+) contacts are provided by aspartate 10, glutamate 48, aspartate 70, and aspartate 134.

Belongs to the RNase H family. As to quaternary structure, monomer. Mg(2+) is required as a cofactor.

It is found in the cytoplasm. It catalyses the reaction Endonucleolytic cleavage to 5'-phosphomonoester.. Its function is as follows. Endonuclease that specifically degrades the RNA of RNA-DNA hybrids. This Sodalis glossinidius (strain morsitans) protein is Ribonuclease H.